A 180-amino-acid chain; its full sequence is Ribosome rescue factor SmrB (180 aa).

Residues 98–173 (LDLHGLTQLQ…GNAALLVLVA (76 aa)) enclose the Smr domain.

It belongs to the SmrB family. In terms of assembly, associates with collided ribosomes, but not with correctly translating polysomes.

Its function is as follows. Acts as a ribosome collision sensor. Detects stalled/collided disomes (pairs of ribosomes where the leading ribosome is stalled and a second ribosome has collided with it) and endonucleolytically cleaves mRNA at the 5' boundary of the stalled ribosome. Stalled/collided disomes form a new interface (primarily via the 30S subunits) that binds SmrB. Cleaved mRNA becomes available for tmRNA ligation, leading to ribosomal subunit dissociation and rescue of stalled ribosomes. The polypeptide is Ribosome rescue factor SmrB (Pectobacterium atrosepticum (strain SCRI 1043 / ATCC BAA-672) (Erwinia carotovora subsp. atroseptica)).